A 240-amino-acid chain; its full sequence is 2,3,4,5-tetrahydropyridine-2,6-dicarboxylate N-acetyltransferase (240 aa).

This sequence belongs to the transferase hexapeptide repeat family. DapH subfamily.

The enzyme catalyses (S)-2,3,4,5-tetrahydrodipicolinate + acetyl-CoA + H2O = L-2-acetamido-6-oxoheptanedioate + CoA. Its pathway is amino-acid biosynthesis; L-lysine biosynthesis via DAP pathway; LL-2,6-diaminopimelate from (S)-tetrahydrodipicolinate (acetylase route): step 1/3. Its function is as follows. Catalyzes the transfer of an acetyl group from acetyl-CoA to tetrahydrodipicolinate. The polypeptide is 2,3,4,5-tetrahydropyridine-2,6-dicarboxylate N-acetyltransferase (Bacillus cereus (strain AH187)).